The following is a 322-amino-acid chain: tRNA pseudouridine synthase B (322 aa).

Residues 1-11 are compositionally biased toward basic and acidic residues; sequence MRPPRTTELDR. Positions 1–22 are disordered; that stretch reads MRPPRTTELDRPMTTAASQRPR. The active-site Nucleophile is aspartate 65.

This sequence belongs to the pseudouridine synthase TruB family. Type 1 subfamily.

The enzyme catalyses uridine(55) in tRNA = pseudouridine(55) in tRNA. In terms of biological role, responsible for synthesis of pseudouridine from uracil-55 in the psi GC loop of transfer RNAs. The sequence is that of tRNA pseudouridine synthase B from Burkholderia lata (strain ATCC 17760 / DSM 23089 / LMG 22485 / NCIMB 9086 / R18194 / 383).